The sequence spans 156 residues: Small ribosomal subunit protein uS7 (156 aa).

Belongs to the universal ribosomal protein uS7 family. As to quaternary structure, part of the 30S ribosomal subunit. Contacts proteins S9 and S11.

One of the primary rRNA binding proteins, it binds directly to 16S rRNA where it nucleates assembly of the head domain of the 30S subunit. Is located at the subunit interface close to the decoding center, probably blocks exit of the E-site tRNA. This Lachnospira eligens (strain ATCC 27750 / DSM 3376 / VPI C15-48 / C15-B4) (Eubacterium eligens) protein is Small ribosomal subunit protein uS7.